The chain runs to 132 residues: Fatty acid-binding protein, intestinal (132 aa).

Ala-2 carries the N-acetylalanine modification. Hexadecanoate contacts are provided by Trp-83 and Arg-107. Trp-83 and Arg-107 together coordinate tetradecanoate.

The protein belongs to the calycin superfamily. Fatty-acid binding protein (FABP) family. Expressed in the small intestine and at much lower levels in the large intestine. Highest expression levels in the jejunum.

It localises to the cytoplasm. In terms of biological role, FABPs are thought to play a role in the intracellular transport of long-chain fatty acids and their acyl-CoA esters. FABP2 is probably involved in triglyceride-rich lipoprotein synthesis. Binds saturated long-chain fatty acids with a high affinity, but binds with a lower affinity to unsaturated long-chain fatty acids. FABP2 may also help maintain energy homeostasis by functioning as a lipid sensor. The protein is Fatty acid-binding protein, intestinal (FABP2) of Homo sapiens (Human).